Here is a 432-residue protein sequence, read N- to C-terminus: Neuropeptide FF receptor 1 (432 aa).

At 1-43 (MEAEPSQPPNGSWPLGQNGSDVETSMATSLTFSSYYQHSSPVA) the chain is on the extracellular side. N-linked (GlcNAc...) asparagine glycosylation is found at N10 and N18. Residues 44-64 (AMFIAAYVLIFLLCMVGNTLV) traverse the membrane as a helical segment. Over 65 to 80 (CFIVLKNRHMRTVTNM) the chain is Cytoplasmic. A helical membrane pass occupies residues 81–101 (FILNLAVSDLLVGIFCMPTTL). At 102-117 (VDNLITGWPFDNATCK) the chain is on the extracellular side. N113 carries N-linked (GlcNAc...) asparagine glycosylation. An intrachain disulfide couples C116 to C203. The helical transmembrane segment at 118 to 138 (MSGLVQGMSVSASVFTLVAIA) threads the bilayer. The Cytoplasmic portion of the chain corresponds to 139–158 (VERFRCIVHPFREKLTLRKA). Residues 159-179 (LFTIAVIWALALLIMCPSAVT) traverse the membrane as a helical segment. The Extracellular segment spans residues 180–214 (LTVTREEHHFMLDARNRSYPLYSCWEAWPEKGMRK). N195 is a glycosylation site (N-linked (GlcNAc...) asparagine). Residues 215–235 (VYTAVLFAHIYLVPLALIVVM) traverse the membrane as a helical segment. At 236–273 (YVRIARKLCQAPGPARDTEEAVAEGGRTSRRRARVVHM) the chain is on the cytoplasmic side. Residues 274–294 (LVMVALFFTLSWLPLWVLLLL) traverse the membrane as a helical segment. At 295–309 (IDYGELSELQLHLLS) the chain is on the extracellular side. Residues 310-330 (VYAFPLAHWLAFFHSSANPII) form a helical membrane-spanning segment. The Cytoplasmic portion of the chain corresponds to 331 to 432 (YGYFNENFRR…MPLTIPAWNI (102 aa)). A compositionally biased stretch (low complexity) spans 380–406 (PSDSGLPSESGPSSGVPGPGRLPLRNG). Residues 380–422 (PSDSGLPSESGPSSGVPGPGRLPLRNGRVAHQDGPGEGPGCNH) form a disordered region.

Belongs to the G-protein coupled receptor 1 family. Expressed at high levels in the hypothalamus. Moderate levels found in the midbrain, thalamus, medulla oblongata, testis, eye, whole brain, cerebral cortex, striatum, hippocampus, cerebellum, optic nerve, placenta, spinal cord, pituitary gland and ovary.

Its subcellular location is the cell membrane. In terms of biological role, receptor for NPAF (A-18-F-amide) and NPFF (F-8-F-amide) neuropeptides, also known as morphine-modulating peptides. Can also be activated by a variety of naturally occurring or synthetic FMRF-amide like ligands. This receptor mediates its action by association with G proteins that activate a phosphatidylinositol-calcium second messenger system. The chain is Neuropeptide FF receptor 1 (Npffr1) from Rattus norvegicus (Rat).